The sequence spans 175 residues: Arsenite oxidase subunit AioB (175 aa).

The segment at residues 1–32 (MSDTINLTRRGFLKVSGSGVAVAATLSPIASA) is a signal peptide (tat-type signal). A Rieske domain is found at 62–158 (NEPVSFTYPD…LRYDEASDAL (97 aa)). [2Fe-2S] cluster contacts are provided by Cys102, His104, Cys120, and His123. Cys107 and Cys122 are disulfide-bonded.

It belongs to the AOX family. As to quaternary structure, heterodimer consisting of a large and a small subunit. [2Fe-2S] cluster serves as cofactor. In terms of processing, predicted to be exported by the Tat system. The position of the signal peptide cleavage has not been experimentally proven.

It carries out the reaction 2 oxidized [azurin] + arsenite + H2O = 2 reduced [azurin] + arsenate + 3 H(+). Functionally, involved in the detoxification of arsenic. Oxidizes As(III)O3(3-) (arsenite) to the somewhat less toxic As(V)O4(3-) (arsenate). This Alcaligenes faecalis protein is Arsenite oxidase subunit AioB (aioB).